Consider the following 98-residue polypeptide: Small ribosomal subunit protein bTHXm (98 aa).

The transit peptide at 1–35 (MAAMQWCGAMTRRIMMTQRTSAALNCSARYSSLSP) directs the protein to the mitochondrion. The disordered stretch occupies residues 52–71 (DKKTKKGKRFKGSYGNSRGK). Residues 53–62 (KKTKKGKRFK) are compositionally biased toward basic residues.

The protein belongs to the bacterial ribosomal protein bTHX family. As to quaternary structure, component of the mitochondrial ribosome small subunit.

The protein localises to the mitochondrion. This Arabidopsis thaliana (Mouse-ear cress) protein is Small ribosomal subunit protein bTHXm.